Here is a 216-residue protein sequence, read N- to C-terminus: Large ribosomal subunit protein uL3 (216 aa).

N5-methylglutamine is present on Gln-153.

This sequence belongs to the universal ribosomal protein uL3 family. As to quaternary structure, part of the 50S ribosomal subunit. Forms a cluster with proteins L14 and L19. Post-translationally, methylated by PrmB.

One of the primary rRNA binding proteins, it binds directly near the 3'-end of the 23S rRNA, where it nucleates assembly of the 50S subunit. In Burkholderia ambifaria (strain MC40-6), this protein is Large ribosomal subunit protein uL3.